The chain runs to 432 residues: Adenylosuccinate synthetase (432 aa).

GTP-binding positions include 12–18 (GDEGKGK) and 40–42 (GHT). The active-site Proton acceptor is D13. Positions 13 and 40 each coordinate Mg(2+). Residues 13–16 (DEGK), 38–41 (NAGH), T130, R144, Q225, T240, and R304 contribute to the IMP site. Catalysis depends on H41, which acts as the Proton donor. 300–306 (ATTGRRR) contributes to the substrate binding site. GTP-binding positions include R306, 332 to 334 (KLD), and 415 to 417 (SVG).

Belongs to the adenylosuccinate synthetase family. In terms of assembly, homodimer. It depends on Mg(2+) as a cofactor.

It is found in the cytoplasm. It catalyses the reaction IMP + L-aspartate + GTP = N(6)-(1,2-dicarboxyethyl)-AMP + GDP + phosphate + 2 H(+). It participates in purine metabolism; AMP biosynthesis via de novo pathway; AMP from IMP: step 1/2. In terms of biological role, plays an important role in the de novo pathway of purine nucleotide biosynthesis. Catalyzes the first committed step in the biosynthesis of AMP from IMP. The polypeptide is Adenylosuccinate synthetase (Syntrophus aciditrophicus (strain SB)).